Reading from the N-terminus, the 37-residue chain is Diuretic hormone 1 (37 aa).

The protein belongs to the sauvagine/corticotropin-releasing factor/urotensin I family.

Its subcellular location is the secreted. Its function is as follows. Stimulates fluid secretion by the Malpighian tubules. Increases cyclic AMP production. This chain is Diuretic hormone 1, found in Tenebrio molitor (Yellow mealworm beetle).